We begin with the raw amino-acid sequence, 712 residues long: Ribosomal RNA large subunit methyltransferase K/L (712 aa).

The THUMP domain occupies 43-154 (LAYRITLWTR…NGQLTISMNF (112 aa)).

It belongs to the methyltransferase superfamily. RlmKL family.

It is found in the cytoplasm. The enzyme catalyses guanosine(2445) in 23S rRNA + S-adenosyl-L-methionine = N(2)-methylguanosine(2445) in 23S rRNA + S-adenosyl-L-homocysteine + H(+). The catalysed reaction is guanosine(2069) in 23S rRNA + S-adenosyl-L-methionine = N(2)-methylguanosine(2069) in 23S rRNA + S-adenosyl-L-homocysteine + H(+). In terms of biological role, specifically methylates the guanine in position 2445 (m2G2445) and the guanine in position 2069 (m7G2069) of 23S rRNA. In Shewanella frigidimarina (strain NCIMB 400), this protein is Ribosomal RNA large subunit methyltransferase K/L.